The sequence spans 249 residues: Triosephosphate isomerase (249 aa).

Substrate is bound by residues N12 and K14. At K14 the chain carries N6-acetyllysine. Y68 is subject to 3'-nitrotyrosine. Residue S80 is modified to Phosphoserine. Residue H96 is the Electrophile of the active site. S106 is modified (phosphoserine). A Glycyl lysine isopeptide (Lys-Gly) (interchain with G-Cter in SUMO1) cross-link involves residue K142. K149 is modified (N6-succinyllysine). Position 156 is an N6-acetyllysine; alternate (K156). K156 bears the N6-succinyllysine; alternate mark. S159 is subject to Phosphoserine. The Proton acceptor role is filled by E166. The residue at position 173 (T173) is a Phosphothreonine. Residue K194 is modified to N6-acetyllysine; alternate. K194 bears the N6-succinyllysine; alternate mark. K194 is subject to N6-methyllysine; alternate. S198 is subject to Phosphoserine. Y209 is modified (3'-nitrotyrosine). S212 carries the post-translational modification Phosphoserine. T214 bears the Phosphothreonine mark. S223 is modified (phosphoserine). K238 is subject to N6-acetyllysine.

Belongs to the triosephosphate isomerase family. In terms of assembly, homodimer.

It is found in the cytoplasm. The enzyme catalyses dihydroxyacetone phosphate = methylglyoxal + phosphate. It carries out the reaction D-glyceraldehyde 3-phosphate = dihydroxyacetone phosphate. Its pathway is carbohydrate degradation; glycolysis; D-glyceraldehyde 3-phosphate from glycerone phosphate: step 1/1. It participates in carbohydrate biosynthesis; gluconeogenesis. Triosephosphate isomerase is an extremely efficient metabolic enzyme that catalyzes the interconversion between dihydroxyacetone phosphate (DHAP) and D-glyceraldehyde-3-phosphate (G3P) in glycolysis and gluconeogenesis. In terms of biological role, it is also responsible for the non-negligible production of methylglyoxal a reactive cytotoxic side-product that modifies and can alter proteins, DNA and lipids. This chain is Triosephosphate isomerase (TPI1), found in Bos taurus (Bovine).